We begin with the raw amino-acid sequence, 585 residues long: YTH domain-containing family protein 3 (585 aa).

3 disordered regions span residues 1 to 52 (MSAT…YPPM), 243 to 277 (RKPA…MNIG), and 304 to 351 (PQPL…QQLQ). An N-acetylserine modification is found at serine 2. Polar residues predominate over residues 15–24 (NKVSVQNGSI). A Phosphoserine modification is found at serine 23. The segment covering 244–254 (KPAKPQPKLKP) has biased composition (basic residues). Residues 329–351 (QQQQGPQPQAQPHQVQPQQQQLQ) show a composition bias toward low complexity. The YTH domain maps to 416–550 (GRVFIIKSYS…EKAKQVLKII (135 aa)). RNA-binding positions include 422-424 (KSY), aspartate 428, 438-439 (WC), asparagine 468, tryptophan 492, and tryptophan 497.

The protein belongs to the YTHDF family. YTHDF3 subfamily. As to quaternary structure, interacts with CNOT1; promoting recruitment of the CCR4-NOT complex. Interacts with YTHDF1. Interacts with YTHDF2. Interacts with PAN3. Post-translationally, (Microbial infection) Proteolytically cleaved by HIV-1 protease when incorporated into HIV-1 particles in a nucleocapsid-dependent-manner. Cleavage by HIV-1 protease probably ensures optimal infectivity of the mature virion.

The protein resides in the cytoplasm. Its subcellular location is the cytosol. It is found in the P-body. It localises to the stress granule. Functionally, specifically recognizes and binds N6-methyladenosine (m6A)-containing RNAs, and regulates their stability. M6A is a modification present at internal sites of mRNAs and some non-coding RNAs and plays a role in mRNA stability and processing. Acts as a regulator of mRNA stability by promoting degradation of m6A-containing mRNAs via interaction with the CCR4-NOT complex or PAN3. The YTHDF paralogs (YTHDF1, YTHDF2 and YTHDF3) share m6A-containing mRNAs targets and act redundantly to mediate mRNA degradation and cellular differentiation. Acts as a negative regulator of type I interferon response by down-regulating interferon-stimulated genes (ISGs) expression: acts by binding to FOXO3 mRNAs. Binds to FOXO3 mRNAs independently of METTL3-mediated m6A modification. Can also act as a regulator of mRNA stability in cooperation with YTHDF2 by binding to m6A-containing mRNA and promoting their degradation. Recognizes and binds m6A-containing circular RNAs (circRNAs); circRNAs are generated through back-splicing of pre-mRNAs, a non-canonical splicing process promoted by dsRNA structures across circularizing exons. Promotes formation of phase-separated membraneless compartments, such as P-bodies or stress granules, by undergoing liquid-liquid phase separation upon binding to mRNAs containing multiple m6A-modified residues: polymethylated mRNAs act as a multivalent scaffold for the binding of YTHDF proteins, juxtaposing their disordered regions and thereby leading to phase separation. The resulting mRNA-YTHDF complexes then partition into different endogenous phase-separated membraneless compartments, such as P-bodies, stress granules or neuronal RNA granules. May also recognize and bind N1-methyladenosine (m1A)-containing mRNAs: inhibits trophoblast invasion by binding to m1A-methylated transcripts of IGF1R, promoting their degradation. Its function is as follows. Has some antiviral activity against HIV-1 virus: incorporated into HIV-1 particles in a nucleocapsid-dependent manner and reduces viral infectivity in the next cycle of infection. May interfere with this early step of the viral life cycle by binding to N6-methyladenosine (m6A) modified sites on the HIV-1 RNA genome. This chain is YTH domain-containing family protein 3, found in Homo sapiens (Human).